We begin with the raw amino-acid sequence, 396 residues long: Anaerobic glycerol-3-phosphate dehydrogenase subunit C (396 aa).

4Fe-4S ferredoxin-type domains are found at residues 2 to 29 and 45 to 76; these read NDTS…PGYP and DGAL…GDII. [4Fe-4S] cluster is bound by residues C9, C12, C15, C19, C56, C59, C62, and C66.

As to quaternary structure, composed of a catalytic GlpA/B dimer and of GlpC.

The protein localises to the cell inner membrane. It participates in polyol metabolism; glycerol degradation via glycerol kinase pathway; glycerone phosphate from sn-glycerol 3-phosphate (anaerobic route): step 1/1. Its function is as follows. Electron transfer protein; may also function as the membrane anchor for the GlpAB dimer. The sequence is that of Anaerobic glycerol-3-phosphate dehydrogenase subunit C (glpC) from Escherichia coli O157:H7.